The following is a 205-amino-acid chain: Thymidylate kinase (205 aa).

10-17 (GIDGAGKS) serves as a coordination point for ATP.

It belongs to the thymidylate kinase family.

It carries out the reaction dTMP + ATP = dTDP + ADP. In terms of biological role, phosphorylation of dTMP to form dTDP in both de novo and salvage pathways of dTTP synthesis. The polypeptide is Thymidylate kinase (Ralstonia pickettii (strain 12J)).